The chain runs to 173 residues: Shikimate kinase 1 (173 aa).

Residue 14 to 19 (GAGKST) participates in ATP binding. Residue S18 coordinates Mg(2+). Residues D36, R60, and G82 each contribute to the substrate site. An ATP-binding site is contributed by R120. Residue R140 participates in substrate binding. Q157 contacts ATP.

This sequence belongs to the shikimate kinase family. As to quaternary structure, monomer. Requires Mg(2+) as cofactor.

The protein localises to the cytoplasm. It catalyses the reaction shikimate + ATP = 3-phosphoshikimate + ADP + H(+). It functions in the pathway metabolic intermediate biosynthesis; chorismate biosynthesis; chorismate from D-erythrose 4-phosphate and phosphoenolpyruvate: step 5/7. Its function is as follows. Catalyzes the specific phosphorylation of the 3-hydroxyl group of shikimic acid using ATP as a cosubstrate. This Salmonella typhimurium (strain LT2 / SGSC1412 / ATCC 700720) protein is Shikimate kinase 1.